Reading from the N-terminus, the 601-residue chain is Molybdenum cofactor synthesis protein cinnamon (601 aa).

The tract at residues 3 to 153 (SITFGVLTIS…TISALLPHAV (151 aa)) is MPT adenylyltransferase. Residues 173-195 (SAQKSHICPHKTGTGTDSDRNSP) form a disordered region. Positions 184 to 596 (TGTGTDSDRN…FPASVLRFDF (413 aa)) are MPT Mo-transferase. Ser376 carries the phosphoserine modification.

The protein in the N-terminal section; belongs to the MoaB/Mog family. This sequence in the C-terminal section; belongs to the MoeA family. Requires Mg(2+) as cofactor.

It catalyses the reaction molybdopterin + ATP + H(+) = adenylyl-molybdopterin + diphosphate. The catalysed reaction is adenylyl-molybdopterin + molybdate = Mo-molybdopterin + AMP + H(+). The protein operates within cofactor biosynthesis; molybdopterin biosynthesis. Its function is as follows. Catalyzes two steps in the biosynthesis of the molybdenum cofactor. In the first step, molybdopterin is adenylated. Subsequently, molybdate is inserted into adenylated molybdopterin and AMP is released. This is Molybdenum cofactor synthesis protein cinnamon (cin) from Drosophila melanogaster (Fruit fly).